Here is a 1103-residue protein sequence, read N- to C-terminus: A disintegrin and metalloproteinase with thrombospondin motifs 10 (1103 aa).

A signal peptide spans M1–A25. Residues F26 to R233 constitute a propeptide that is removed on maturation. N90, N222, and N323 each carry an N-linked (GlcNAc...) asparagine glycan. A disordered region spans residues K213 to R233. Residues R239–P457 form the Peptidase M12B domain. Disulfide bonds link C315/C376, C351/C358, C370/C452, C409/C436, C479/C501, C490/C508, C496/C531, C521/C536, C559/C596, C563/C601, and C574/C586. H392 is a Zn(2+) binding site. E393 is an active-site residue. H396 and H402 together coordinate Zn(2+). The 87-residue stretch at Q460–V546 folds into the Disintegrin domain. The TSP type-1 1 domain maps to D547–P602. The tract at residues E706 to S828 is spacer. 2 N-linked (GlcNAc...) asparagine glycosylation sites follow: N740 and N795. 4 consecutive TSP type-1 domains span residues P825–P883, C884–P945, E947–R1001, and P1003–D1058. N892 carries an N-linked (GlcNAc...) asparagine glycan. A PLAC domain is found at G1065–H1103.

In terms of assembly, interacts with FBN1; this interaction promotes microfibrils assembly. Requires Zn(2+) as cofactor. Post-translationally, glycosylated. Can be O-fucosylated by POFUT2 on a serine or a threonine residue found within the consensus sequence C1-X(2)-(S/T)-C2-G of the TSP type-1 repeat domains where C1 and C2 are the first and second cysteine residue of the repeat, respectively. Fucosylated repeats can then be further glycosylated by the addition of a beta-1,3-glucose residue by the glucosyltransferase, B3GALTL. Fucosylation mediates the efficient secretion of ADAMTS family members. Can also be C-glycosylated with one or two mannose molecules on tryptophan residues within the consensus sequence W-X-X-W of the TPRs, and N-glycosylated. These other glycosylations can also facilitate secretion. In terms of tissue distribution, widely expressed in adult tissues.

The protein resides in the secreted. It localises to the extracellular space. Its subcellular location is the extracellular matrix. In terms of biological role, metalloprotease that participate in microfibrils assembly. Microfibrils are extracellular matrix components occurring independently or along with elastin in the formation of elastic tissues. In Homo sapiens (Human), this protein is A disintegrin and metalloproteinase with thrombospondin motifs 10 (ADAMTS10).